Here is a 311-residue protein sequence, read N- to C-terminus: Glycosyltransferase 6 domain-containing protein 1 (311 aa).

At 1–5 (MKAKR) the chain is on the cytoplasmic side. A helical; Signal-anchor for type II membrane protein transmembrane segment spans residues 6-26 (RILLQLLTFCLFLLLLAKIHF). Topologically, residues 27-311 (RNHQEEELLL…KIAHHPIDTL (285 aa)) are lumenal. The N-linked (GlcNAc...) asparagine glycan is linked to N77. Substrate contacts are provided by residues 85 to 90 (FAVGSL), 176 to 178 (NIN), and 198 to 201 (HPWW). E266 functions as the Nucleophile in the catalytic mechanism.

It belongs to the glycosyltransferase 6 family. It depends on Mn(2+) as a cofactor.

It is found in the membrane. This chain is Glycosyltransferase 6 domain-containing protein 1 (Glt6d1), found in Mus musculus (Mouse).